The sequence spans 56 residues: PI-stichotoxin-Hcr2m (56 aa).

Residues C4–C54 enclose the BPTI/Kunitz inhibitor domain. 3 disulfides stabilise this stretch: C4-C54, C13-C37, and C29-C50.

This sequence belongs to the venom Kunitz-type family. Sea anemone type 2 potassium channel toxin subfamily.

It localises to the secreted. Its subcellular location is the nematocyst. Its function is as follows. This recombinant serine protease inhibitor inhibits trypsin (Ki=210 nM). In contrast to other sea anemone serine protease inhibitors, it does not significantly blocks histamine influence on intracellular calcium concentration in murine bone marrow-derived macrophages (tested at 1 and 10 uM). In vitro, it shows cytoprotective activity in the oxidative stress agent 6-hydroxydopamine (6-OHDA)-induced neurotoxicity model. In this model, it decreases reactive oxygen species (ROS) levels, and increases cell viability in a correlated manner. It is possible that the observed effect is due to the ability of this peptides to act as free-radical scavenger. In vivo, it shows analgesic activity, since it increases hot plate and tail flick withdrawal latencies, when using a mice thermal pain stimulation model. This chain is PI-stichotoxin-Hcr2m, found in Radianthus crispa (Leathery sea anemone).